A 691-amino-acid polypeptide reads, in one-letter code: Elongation factor G (691 aa).

A tr-type G domain is found at 8–282; it reads DRVRNIGIAA…AVVDYLPAPI (275 aa). GTP is bound by residues 17-24, 81-85, and 135-138; these read AHIDAGKT, DTPGH, and NKMD.

The protein belongs to the TRAFAC class translation factor GTPase superfamily. Classic translation factor GTPase family. EF-G/EF-2 subfamily.

The protein localises to the cytoplasm. In terms of biological role, catalyzes the GTP-dependent ribosomal translocation step during translation elongation. During this step, the ribosome changes from the pre-translocational (PRE) to the post-translocational (POST) state as the newly formed A-site-bound peptidyl-tRNA and P-site-bound deacylated tRNA move to the P and E sites, respectively. Catalyzes the coordinated movement of the two tRNA molecules, the mRNA and conformational changes in the ribosome. This chain is Elongation factor G, found in Synechococcus sp. (strain RCC307).